Consider the following 460-residue polypeptide: Probable serine/threonine-protein kinase kinase DDB_G0280557 (460 aa).

A Protein kinase domain is found at 102-416 (INLKSITDCG…IDQLLAHKYF (315 aa)). ATP contacts are provided by residues Lys-131 and 154-162 (QRHFQQHPL). The active-site Proton acceptor is Asp-250.

This sequence belongs to the protein kinase superfamily. CMGC Ser/Thr protein kinase family. MAP kinase subfamily.

The catalysed reaction is L-seryl-[protein] + ATP = O-phospho-L-seryl-[protein] + ADP + H(+). The enzyme catalyses L-threonyl-[protein] + ATP = O-phospho-L-threonyl-[protein] + ADP + H(+). This Dictyostelium discoideum (Social amoeba) protein is Probable serine/threonine-protein kinase kinase DDB_G0280557.